The chain runs to 500 residues: MPDAVKVGFVPFSTASRGTLVVFCDETLKFGRAAGKALGSSAGLVKRAAAANQFKGKSATTLDILAPEGLKADRLIVVGVGKTPALKSSDFLKLGGVIAGKVRSDNNGVTIIAELPSATMEPDLSASLASGIRLRAYKFDRYKTRKKEGDDAVNRADVSIAVADVAAAKKAFAPVNHVVNGVIIARDLVNEPPNVLYPEEFARRASRLRAMGVGIDVLDVKAMTKLGMGALLGVGQGSARPSRTVVMRWNGGKKGEPPVAFVGKGVCFDTGGISIKPANGMEEMKGDMGGAACVVGLMHALAARKAKVNAIGAIGIVENMPDGSAQRPGDIVTSMSGQTIEIINTDAEGRLVLADVLWYVARKFKPKVMIDLATLTGAIMVALGTEHAGLFSNNDELSERLTRAGLDTGERVWRMPLAPEYDKLIDSKFADMKNTGGRHGGSITAAQFLQRFVDDTPWAHLDIAGTAMGAPKSDINQSWGSGFGVRLLDRLVAEHYETKR.

Mn(2+)-binding residues include K264 and D269. The active site involves K276. 3 residues coordinate Mn(2+): D287, D346, and E348. The active site involves R350.

It belongs to the peptidase M17 family. Requires Mn(2+) as cofactor.

The protein localises to the cytoplasm. It carries out the reaction Release of an N-terminal amino acid, Xaa-|-Yaa-, in which Xaa is preferably Leu, but may be other amino acids including Pro although not Arg or Lys, and Yaa may be Pro. Amino acid amides and methyl esters are also readily hydrolyzed, but rates on arylamides are exceedingly low.. It catalyses the reaction Release of an N-terminal amino acid, preferentially leucine, but not glutamic or aspartic acids.. In terms of biological role, presumably involved in the processing and regular turnover of intracellular proteins. Catalyzes the removal of unsubstituted N-terminal amino acids from various peptides. The sequence is that of Probable cytosol aminopeptidase from Nitrobacter winogradskyi (strain ATCC 25391 / DSM 10237 / CIP 104748 / NCIMB 11846 / Nb-255).